The following is a 342-amino-acid chain: S-adenosylmethionine:tRNA ribosyltransferase-isomerase (342 aa).

This sequence belongs to the QueA family. As to quaternary structure, monomer.

The protein localises to the cytoplasm. It carries out the reaction 7-aminomethyl-7-carbaguanosine(34) in tRNA + S-adenosyl-L-methionine = epoxyqueuosine(34) in tRNA + adenine + L-methionine + 2 H(+). The protein operates within tRNA modification; tRNA-queuosine biosynthesis. Functionally, transfers and isomerizes the ribose moiety from AdoMet to the 7-aminomethyl group of 7-deazaguanine (preQ1-tRNA) to give epoxyqueuosine (oQ-tRNA). The protein is S-adenosylmethionine:tRNA ribosyltransferase-isomerase of Campylobacter jejuni (strain RM1221).